The primary structure comprises 699 residues: Glycine--tRNA ligase beta subunit (699 aa).

This sequence belongs to the class-II aminoacyl-tRNA synthetase family. As to quaternary structure, tetramer of two alpha and two beta subunits.

The protein resides in the cytoplasm. The catalysed reaction is tRNA(Gly) + glycine + ATP = glycyl-tRNA(Gly) + AMP + diphosphate. This Bradyrhizobium diazoefficiens (strain JCM 10833 / BCRC 13528 / IAM 13628 / NBRC 14792 / USDA 110) protein is Glycine--tRNA ligase beta subunit.